A 173-amino-acid chain; its full sequence is Large ribosomal subunit protein uL10 (173 aa).

Belongs to the universal ribosomal protein uL10 family. Part of the ribosomal stalk of the 50S ribosomal subunit. The N-terminus interacts with L11 and the large rRNA to form the base of the stalk. The C-terminus forms an elongated spine to which L12 dimers bind in a sequential fashion forming a multimeric L10(L12)X complex.

Its function is as follows. Forms part of the ribosomal stalk, playing a central role in the interaction of the ribosome with GTP-bound translation factors. The sequence is that of Large ribosomal subunit protein uL10 from Geobacter sp. (strain M21).